We begin with the raw amino-acid sequence, 290 residues long: Acetyl-coenzyme A carboxylase carboxyl transferase subunit beta (290 aa).

The 261-residue stretch at 30–290 folds into the CoA carboxyltransferase N-terminal domain; the sequence is IMTKCPKCKK…HAGQEVNKDA (261 aa). Zn(2+) contacts are provided by cysteine 34, cysteine 37, cysteine 53, and cysteine 56. A C4-type zinc finger spans residues 34-56; that stretch reads CPKCKKIMYTKELSENLNVCFNC.

It belongs to the AccD/PCCB family. In terms of assembly, acetyl-CoA carboxylase is a heterohexamer composed of biotin carboxyl carrier protein (AccB), biotin carboxylase (AccC) and two subunits each of ACCase subunit alpha (AccA) and ACCase subunit beta (AccD). Zn(2+) serves as cofactor.

Its subcellular location is the cytoplasm. It carries out the reaction N(6)-carboxybiotinyl-L-lysyl-[protein] + acetyl-CoA = N(6)-biotinyl-L-lysyl-[protein] + malonyl-CoA. It participates in lipid metabolism; malonyl-CoA biosynthesis; malonyl-CoA from acetyl-CoA: step 1/1. Functionally, component of the acetyl coenzyme A carboxylase (ACC) complex. Biotin carboxylase (BC) catalyzes the carboxylation of biotin on its carrier protein (BCCP) and then the CO(2) group is transferred by the transcarboxylase to acetyl-CoA to form malonyl-CoA. The polypeptide is Acetyl-coenzyme A carboxylase carboxyl transferase subunit beta (Staphylococcus carnosus (strain TM300)).